Reading from the N-terminus, the 332-residue chain is MAEEKIYDITIIGGGPVGLWAAFYAGLRGMTVNIIESLSELGGQPAILYPEKKIYDIPAFPQTTGAELIENLLIQLKRFEDRVSIHLKEEVQTFKKTDGIFTIATSKGQHLSKAIVIACGNGAFAPRPLGVDNEEDFANNNLLYNVHSLDQFAGKKVVIAGGGDSAVDWANHLDGVAESVTLIHRRDAFRAHEHSVELLYQSSVNVMTPYVPLEIKGENGHAQSLTVQRVKSDEVVELPIDALIVSFGFSTNNKNLRNWNVDYKRSSITVNAQFETSQEGVYAIGGAAEYDGKIDLIAVGMGEAPIAINQAIQYIEPDGKNRPVHSTSLIEE.

Residues glutamate 36, glutamine 44, tyrosine 49, valine 91, phenylalanine 124, and threonine 327 each coordinate FAD.

The protein belongs to the ferredoxin--NADP reductase type 2 family. As to quaternary structure, homodimer. Requires FAD as cofactor.

The enzyme catalyses 2 reduced [2Fe-2S]-[ferredoxin] + NADP(+) + H(+) = 2 oxidized [2Fe-2S]-[ferredoxin] + NADPH. The protein is Ferredoxin--NADP reductase of Streptococcus thermophilus (strain CNRZ 1066).